The chain runs to 243 residues: 2-C-methyl-D-erythritol 4-phosphate cytidylyltransferase (243 aa).

This sequence belongs to the IspD/TarI cytidylyltransferase family. IspD subfamily.

It catalyses the reaction 2-C-methyl-D-erythritol 4-phosphate + CTP + H(+) = 4-CDP-2-C-methyl-D-erythritol + diphosphate. The protein operates within isoprenoid biosynthesis; isopentenyl diphosphate biosynthesis via DXP pathway; isopentenyl diphosphate from 1-deoxy-D-xylulose 5-phosphate: step 2/6. In terms of biological role, catalyzes the formation of 4-diphosphocytidyl-2-C-methyl-D-erythritol from CTP and 2-C-methyl-D-erythritol 4-phosphate (MEP). This chain is 2-C-methyl-D-erythritol 4-phosphate cytidylyltransferase, found in Rhodopirellula baltica (strain DSM 10527 / NCIMB 13988 / SH1).